The primary structure comprises 186 residues: ATP synthase subunit delta, chloroplastic (186 aa).

This sequence belongs to the ATPase delta chain family. As to quaternary structure, F-type ATPases have 2 components, F(1) - the catalytic core - and F(0) - the membrane proton channel. F(1) has five subunits: alpha(3), beta(3), gamma(1), delta(1), epsilon(1). CF(0) has four main subunits: a(1), b(1), b'(1) and c(10-14). The alpha and beta chains form an alternating ring which encloses part of the gamma chain. F(1) is attached to F(0) by a central stalk formed by the gamma and epsilon chains, while a peripheral stalk is formed by the delta, b and b' chains.

It localises to the plastid. Its subcellular location is the chloroplast thylakoid membrane. F(1)F(0) ATP synthase produces ATP from ADP in the presence of a proton or sodium gradient. F-type ATPases consist of two structural domains, F(1) containing the extramembraneous catalytic core and F(0) containing the membrane proton channel, linked together by a central stalk and a peripheral stalk. During catalysis, ATP synthesis in the catalytic domain of F(1) is coupled via a rotary mechanism of the central stalk subunits to proton translocation. Its function is as follows. This protein is part of the stalk that links CF(0) to CF(1). It either transmits conformational changes from CF(0) to CF(1) or is implicated in proton conduction. The protein is ATP synthase subunit delta, chloroplastic of Porphyra purpurea (Red seaweed).